The following is a 258-amino-acid chain: Phosphoribosylaminoimidazole-succinocarboxamide synthase (258 aa).

It belongs to the SAICAR synthetase family.

The enzyme catalyses 5-amino-1-(5-phospho-D-ribosyl)imidazole-4-carboxylate + L-aspartate + ATP = (2S)-2-[5-amino-1-(5-phospho-beta-D-ribosyl)imidazole-4-carboxamido]succinate + ADP + phosphate + 2 H(+). It participates in purine metabolism; IMP biosynthesis via de novo pathway; 5-amino-1-(5-phospho-D-ribosyl)imidazole-4-carboxamide from 5-amino-1-(5-phospho-D-ribosyl)imidazole-4-carboxylate: step 1/2. The protein is Phosphoribosylaminoimidazole-succinocarboxamide synthase of Rhizorhabdus wittichii (strain DSM 6014 / CCUG 31198 / JCM 15750 / NBRC 105917 / EY 4224 / RW1) (Sphingomonas wittichii).